Consider the following 268-residue polypeptide: Formamidopyrimidine-DNA glycosylase (268 aa).

P2 serves as the catalytic Schiff-base intermediate with DNA. E3 serves as the catalytic Proton donor. The Proton donor; for beta-elimination activity role is filled by K56. H91, R110, and R149 together coordinate DNA. The FPG-type zinc-finger motif lies at 234 to 268 (QVYGRFNQACPNCGQPLKRSRIGGRSSHYCEKCQQ). R258 acts as the Proton donor; for delta-elimination activity in catalysis.

It belongs to the FPG family. Monomer. Zn(2+) serves as cofactor.

The catalysed reaction is Hydrolysis of DNA containing ring-opened 7-methylguanine residues, releasing 2,6-diamino-4-hydroxy-5-(N-methyl)formamidopyrimidine.. It carries out the reaction 2'-deoxyribonucleotide-(2'-deoxyribose 5'-phosphate)-2'-deoxyribonucleotide-DNA = a 3'-end 2'-deoxyribonucleotide-(2,3-dehydro-2,3-deoxyribose 5'-phosphate)-DNA + a 5'-end 5'-phospho-2'-deoxyribonucleoside-DNA + H(+). In terms of biological role, involved in base excision repair of DNA damaged by oxidation or by mutagenic agents. Acts as a DNA glycosylase that recognizes and removes damaged bases. Has a preference for oxidized purines, such as 7,8-dihydro-8-oxoguanine (8-oxoG). Has AP (apurinic/apyrimidinic) lyase activity and introduces nicks in the DNA strand. Cleaves the DNA backbone by beta-delta elimination to generate a single-strand break at the site of the removed base with both 3'- and 5'-phosphates. The chain is Formamidopyrimidine-DNA glycosylase from Syntrophomonas wolfei subsp. wolfei (strain DSM 2245B / Goettingen).